We begin with the raw amino-acid sequence, 432 residues long: Enolase (432 aa).

Residue Gln-164 coordinates (2R)-2-phosphoglycerate. Glu-206 (proton donor) is an active-site residue. Mg(2+)-binding residues include Asp-243, Glu-284, and Asp-311. (2R)-2-phosphoglycerate-binding residues include Lys-336, Arg-365, Ser-366, and Lys-387. Lys-336 acts as the Proton acceptor in catalysis.

Belongs to the enolase family. Mg(2+) is required as a cofactor.

Its subcellular location is the cytoplasm. It localises to the secreted. The protein resides in the cell surface. It catalyses the reaction (2R)-2-phosphoglycerate = phosphoenolpyruvate + H2O. Its pathway is carbohydrate degradation; glycolysis; pyruvate from D-glyceraldehyde 3-phosphate: step 4/5. Catalyzes the reversible conversion of 2-phosphoglycerate (2-PG) into phosphoenolpyruvate (PEP). It is essential for the degradation of carbohydrates via glycolysis. This is Enolase from Synechococcus sp. (strain JA-3-3Ab) (Cyanobacteria bacterium Yellowstone A-Prime).